A 203-amino-acid polypeptide reads, in one-letter code: MRRAILLILTLTVGTSLAAGFSQKDTPINTRYRETPEEAAAREFKEHTAELPPLPDAHSDGWFDIYVDENYGKQPKILLDSLQIMPAPDGSIRYILNIRSDKGYDNLTAEGIFCARSSIGFGNGKLSSYKVFGYGDTVNSRWIQPRNAEWKPIGGTLGRNDALRAVLYQAFCEGGVPADTQGLVQRLKERAGRYAPSMKPHDK.

Residues 1-18 (MRRAILLILTLTVGTSLA) form the signal peptide.

It belongs to the Cnp family.

It localises to the periplasm. The protein localises to the cytoplasm. In Neisseria gonorrhoeae (strain ATCC 700825 / FA 1090), this protein is Cryptic neisserial protein 1.